Reading from the N-terminus, the 197-residue chain is Beta-crystallin A2 (197 aa).

The tract at residues 1 to 11 (MSSAPAPGPAP) is N-terminal arm. Beta/gamma crystallin 'Greek key' domains are found at residues 12–52 (ASLT…KVEN) and 53–99 (GVWV…RPVL). Positions 100–105 (CANHND) are connecting peptide. 2 Beta/gamma crystallin 'Greek key' domains span residues 106-147 (SRVT…KVSS) and 148-196 (GAWV…RRVQ).

The protein belongs to the beta/gamma-crystallin family. In terms of assembly, homo/heterodimer, or complexes of higher-order. The structure of beta-crystallin oligomers seems to be stabilized through interactions between the N-terminal arms.

Functionally, crystallins are the dominant structural components of the vertebrate eye lens. The chain is Beta-crystallin A2 (CRYBA2) from Homo sapiens (Human).